A 178-amino-acid polypeptide reads, in one-letter code: N-alpha-acetyltransferase 20 (178 aa).

One can recognise an N-acetyltransferase domain in the interval 2–157 (TSLRPFTCDD…DAYDMRKALS (156 aa)). The interval 159-178 (DTEKKSIVPLPHPVRPEDIE) is disordered.

Belongs to the acetyltransferase family. ARD1 subfamily. As to quaternary structure, component of the N-terminal acetyltransferase B (NatB) complex which is composed of naa20 and naa25.

It localises to the cytoplasm. It is found in the nucleus. The enzyme catalyses N-terminal L-methionyl-L-asparaginyl-[protein] + acetyl-CoA = N-terminal N(alpha)-acetyl-L-methionyl-L-asparaginyl-[protein] + CoA + H(+). The catalysed reaction is N-terminal L-methionyl-L-glutaminyl-[protein] + acetyl-CoA = N-terminal N(alpha)-acetyl-L-methionyl-L-glutaminyl-[protein] + CoA + H(+). It carries out the reaction N-terminal L-methionyl-L-aspartyl-[protein] + acetyl-CoA = N-terminal N(alpha)-acetyl-L-methionyl-L-aspartyl-[protein] + CoA + H(+). It catalyses the reaction N-terminal L-methionyl-L-glutamyl-[protein] + acetyl-CoA = N-terminal N(alpha)-acetyl-L-methionyl-L-glutamyl-[protein] + CoA + H(+). Its function is as follows. Catalytic subunit of the NatB complex which catalyzes acetylation of the N-terminal methionine residues of peptides beginning with Met-Asp, Met-Glu, Met-Asn and Met-Gln. Proteins with cell cycle functions are overrepresented in the pool of NatB substrates. Required for maintaining the structure and function of actomyosin fibers and for proper cellular migration. This chain is N-alpha-acetyltransferase 20 (naa20), found in Xenopus tropicalis (Western clawed frog).